Reading from the N-terminus, the 335-residue chain is RVS161-like protein RVS162 (335 aa).

The region spanning 17-310 is the BAR domain; that stretch reads VMLKTGHIEQ…LDAQTRQDYI (294 aa). Residues 30-56 are a coiled coil; the sequence is KEYEFQEKRYRTMEENSIKLQKNLRLY. The tract at residues 105–127 is disordered; sequence HEEEGEEKEEEENDNTTTTTTTT. Over residues 107–118 the composition is skewed to acidic residues; the sequence is EEGEEKEEEEND. A coiled-coil region spans residues 222 to 259; it reads TNIIELNHNQYEEKLKIYNQELTEVESKYVEINNQLLI.

Its subcellular location is the cytoplasm. It is found in the cytoskeleton. Its function is as follows. Component of a cytoskeletal structure that is required for membrane curvature. This is RVS161-like protein RVS162 from Candida albicans (strain SC5314 / ATCC MYA-2876) (Yeast).